The sequence spans 131 residues: Small ribosomal subunit protein bS16 (131 aa).

Residues 87–117 (IGKSKQEELRKSEAKTSAKNKKANEEKANEE) show a composition bias toward basic and acidic residues. The segment at 87 to 131 (IGKSKQEELRKSEAKTSAKNKKANEEKANEEKVEESETLEASSEA) is disordered.

The protein belongs to the bacterial ribosomal protein bS16 family.

The sequence is that of Small ribosomal subunit protein bS16 from Prochlorococcus marinus (strain SARG / CCMP1375 / SS120).